The primary structure comprises 841 residues: Replication origin-binding protein (841 aa).

In terms of domain architecture, Helicase ATP-binding spans 45–210 (PLYPRTRNVL…AIMRGEENIH (166 aa)). An ATP-binding site is contributed by 58 to 65 (APMGSGKT).

Belongs to the herpesviridae OriBP family. In terms of assembly, homodimer. Interacts with the major DNA-binding protein. Interacts with the DNA helicase/primase complex-associated protein and the polymerase accessory protein.

It is found in the host nucleus. Its function is as follows. Functions as a docking protein to recruit essential components of the viral replication machinery to viral DNA origins. In the presence of the major DNA-binding protein, opens dsDNA leading to a conformational change in the origin that facilitates DNA unwinding and subsequent replication. The chain is Replication origin-binding protein (MDV021) from Gallid herpesvirus 2 (strain Chicken/Md5/ATCC VR-987) (GaHV-2).